Here is a 254-residue protein sequence, read N- to C-terminus: Ribosomal RNA large subunit methyltransferase E (254 aa).

Residues 1-28 (MTTPPRGPDGRPLKVRVKKSRGRTTSSQ) are disordered. Residues 13–22 (LKVRVKKSRG) show a composition bias toward basic residues. Residues Gly80, Trp82, Asp103, Asp119, and Asp143 each contribute to the S-adenosyl-L-methionine site. Lys183 (proton acceptor) is an active-site residue. Residues 231-254 (DRAETDDAGTDGTGTAEAQAPRDQ) are disordered.

The protein belongs to the class I-like SAM-binding methyltransferase superfamily. RNA methyltransferase RlmE family.

The protein localises to the cytoplasm. It catalyses the reaction uridine(2552) in 23S rRNA + S-adenosyl-L-methionine = 2'-O-methyluridine(2552) in 23S rRNA + S-adenosyl-L-homocysteine + H(+). Functionally, specifically methylates the uridine in position 2552 of 23S rRNA at the 2'-O position of the ribose in the fully assembled 50S ribosomal subunit. This Xanthobacter autotrophicus (strain ATCC BAA-1158 / Py2) protein is Ribosomal RNA large subunit methyltransferase E.